Reading from the N-terminus, the 205-residue chain is Ribosomal RNA small subunit methyltransferase G (205 aa).

Residues G66, F71, 119-120, and R135 contribute to the S-adenosyl-L-methionine site; that span reads IE.

The protein belongs to the methyltransferase superfamily. RNA methyltransferase RsmG family.

The protein localises to the cytoplasm. It catalyses the reaction guanosine(527) in 16S rRNA + S-adenosyl-L-methionine = N(7)-methylguanosine(527) in 16S rRNA + S-adenosyl-L-homocysteine. In terms of biological role, specifically methylates the N7 position of guanine in position 527 of 16S rRNA. This Rhizobium rhizogenes (strain K84 / ATCC BAA-868) (Agrobacterium radiobacter) protein is Ribosomal RNA small subunit methyltransferase G.